We begin with the raw amino-acid sequence, 353 residues long: Photosystem II D2 protein (353 aa).

N-acetylthreonine is present on threonine 2. Residue threonine 2 is modified to Phosphothreonine. The chain crosses the membrane as a helical span at residues 41–61 (CAYFALGGWFTGTTFVTSWYT). Chlorophyll a is bound at residue histidine 118. The chain crosses the membrane as a helical span at residues 125-141 (GFMLRQFELARSVQLRP). Pheophytin a contacts are provided by glutamine 130 and asparagine 143. The helical transmembrane segment at 153–166 (VFVSVFLIYPLGQS) threads the bilayer. A chlorophyll a-binding site is contributed by histidine 198. A helical membrane pass occupies residues 208-228 (AALLCAIHGATVENTLFEDGD). A plastoquinone contacts are provided by histidine 215 and phenylalanine 262. Histidine 215 is a binding site for Fe cation. Histidine 269 lines the Fe cation pocket. Residues 279 to 295 (GLWMSALGVVGLALNLR) form a helical membrane-spanning segment.

It belongs to the reaction center PufL/M/PsbA/D family. In terms of assembly, PSII is composed of 1 copy each of membrane proteins PsbA, PsbB, PsbC, PsbD, PsbE, PsbF, PsbH, PsbI, PsbJ, PsbK, PsbL, PsbM, PsbT, PsbX, PsbY, PsbZ, Psb30/Ycf12, at least 3 peripheral proteins of the oxygen-evolving complex and a large number of cofactors. It forms dimeric complexes. The D1/D2 heterodimer binds P680, chlorophylls that are the primary electron donor of PSII, and subsequent electron acceptors. It shares a non-heme iron and each subunit binds pheophytin, quinone, additional chlorophylls, carotenoids and lipids. There is also a Cl(-1) ion associated with D1 and D2, which is required for oxygen evolution. The PSII complex binds additional chlorophylls, carotenoids and specific lipids. serves as cofactor.

Its subcellular location is the plastid. The protein localises to the chloroplast thylakoid membrane. The enzyme catalyses 2 a plastoquinone + 4 hnu + 2 H2O = 2 a plastoquinol + O2. Its function is as follows. Photosystem II (PSII) is a light-driven water:plastoquinone oxidoreductase that uses light energy to abstract electrons from H(2)O, generating O(2) and a proton gradient subsequently used for ATP formation. It consists of a core antenna complex that captures photons, and an electron transfer chain that converts photonic excitation into a charge separation. The D1/D2 (PsbA/PsbD) reaction center heterodimer binds P680, the primary electron donor of PSII as well as several subsequent electron acceptors. D2 is needed for assembly of a stable PSII complex. This Glycine max (Soybean) protein is Photosystem II D2 protein.